We begin with the raw amino-acid sequence, 78 residues long: uncharacterized protein (78 aa).

The segment at methionine 1–lysine 28 is disordered.

This is an uncharacterized protein from Saccharomyces cerevisiae (strain ATCC 204508 / S288c) (Baker's yeast).